Reading from the N-terminus, the 632-residue chain is PWWP domain-containing protein 5 (632 aa).

Residues 97 to 158 form the PWWP domain; the sequence is DSDLVWAKLR…ASQIKPFHQN (62 aa). The segment at 310–452 is disordered; sequence RKTDYKDNAE…AERKISSPDE (143 aa). 4 stretches are compositionally biased toward basic and acidic residues: residues 313–326, 339–364, 371–383, and 425–449; these read DYKDNAEQTKEKTL, STEKLDGKSHSEKKRKVESSESGKSE, QQKEDSVSKHSNE, and KSTEVENEKTKKPRHQELAERKISS. Positions 352–359 match the Nuclear localization signal motif; that stretch reads KRKVESSE.

The protein belongs to the PDP family. Component of the PRC2 (polycomb repressive complex 2) complex which regulates histone methylation on histone H3K27.

It is found in the nucleus. In terms of biological role, may influence gene expression by regulating the function of the PRC2 complex and modulating H3K27me3 level. The protein is PWWP domain-containing protein 5 of Arabidopsis thaliana (Mouse-ear cress).